Reading from the N-terminus, the 358-residue chain is Probable protein phosphatase 2C 34 (358 aa).

Residues 62 to 349 (LASVFSRRGE…DDISAVCLFF (288 aa)) form the PPM-type phosphatase domain. The Mn(2+) site is built by D98, G99, D294, and D340.

The protein belongs to the PP2C family. Mg(2+) serves as cofactor. Requires Mn(2+) as cofactor.

It carries out the reaction O-phospho-L-seryl-[protein] + H2O = L-seryl-[protein] + phosphate. The enzyme catalyses O-phospho-L-threonyl-[protein] + H2O = L-threonyl-[protein] + phosphate. The polypeptide is Probable protein phosphatase 2C 34 (Arabidopsis thaliana (Mouse-ear cress)).